The chain runs to 481 residues: Glutamate--tRNA ligase (481 aa).

The 'HIGH' region signature appears at 28–38; sequence PSPTGFLHLGG. Basic and acidic residues predominate over residues 139–148; it reads RYDGTWRPEP. The disordered stretch occupies residues 139-159; that stretch reads RYDGTWRPEPGKTLPPVPADR. The short motif at 260-264 is the 'KMSKS' region element; the sequence is KLSKR. Lys-263 is an ATP binding site.

Belongs to the class-I aminoacyl-tRNA synthetase family. Glutamate--tRNA ligase type 1 subfamily. As to quaternary structure, monomer.

Its subcellular location is the cytoplasm. The catalysed reaction is tRNA(Glu) + L-glutamate + ATP = L-glutamyl-tRNA(Glu) + AMP + diphosphate. In terms of biological role, catalyzes the attachment of glutamate to tRNA(Glu) in a two-step reaction: glutamate is first activated by ATP to form Glu-AMP and then transferred to the acceptor end of tRNA(Glu). The protein is Glutamate--tRNA ligase of Bordetella bronchiseptica (strain ATCC BAA-588 / NCTC 13252 / RB50) (Alcaligenes bronchisepticus).